Here is a 612-residue protein sequence, read N- to C-terminus: Dihydroxy-acid dehydratase (612 aa).

A Mg(2+)-binding site is contributed by aspartate 81. Cysteine 122 is a [2Fe-2S] cluster binding site. Mg(2+) is bound by residues aspartate 123 and lysine 124. An N6-carboxylysine modification is found at lysine 124. Position 193 (cysteine 193) interacts with [2Fe-2S] cluster. Residue glutamate 489 participates in Mg(2+) binding. Serine 515 serves as the catalytic Proton acceptor.

It belongs to the IlvD/Edd family. In terms of assembly, homodimer. It depends on [2Fe-2S] cluster as a cofactor. The cofactor is Mg(2+).

It catalyses the reaction (2R)-2,3-dihydroxy-3-methylbutanoate = 3-methyl-2-oxobutanoate + H2O. The enzyme catalyses (2R,3R)-2,3-dihydroxy-3-methylpentanoate = (S)-3-methyl-2-oxopentanoate + H2O. Its pathway is amino-acid biosynthesis; L-isoleucine biosynthesis; L-isoleucine from 2-oxobutanoate: step 3/4. The protein operates within amino-acid biosynthesis; L-valine biosynthesis; L-valine from pyruvate: step 3/4. Its function is as follows. Functions in the biosynthesis of branched-chain amino acids. Catalyzes the dehydration of (2R,3R)-2,3-dihydroxy-3-methylpentanoate (2,3-dihydroxy-3-methylvalerate) into 2-oxo-3-methylpentanoate (2-oxo-3-methylvalerate) and of (2R)-2,3-dihydroxy-3-methylbutanoate (2,3-dihydroxyisovalerate) into 2-oxo-3-methylbutanoate (2-oxoisovalerate), the penultimate precursor to L-isoleucine and L-valine, respectively. The polypeptide is Dihydroxy-acid dehydratase (Stenotrophomonas maltophilia (strain K279a)).